We begin with the raw amino-acid sequence, 421 residues long: Tubulin gamma-3 chain (421 aa).

Residue 94-100 coordinates GTP; that stretch reads AGGTGSG.

Belongs to the tubulin family.

It localises to the cytoplasm. It is found in the cytoskeleton. The protein localises to the microtubule organizing center. Functionally, tubulin is the major constituent of microtubules. The gamma chain is found at microtubule organizing centers (MTOC) such as the spindle poles, suggesting that it is involved in the minus-end nucleation of microtubule assembly. This is Tubulin gamma-3 chain (TUBG3) from Zea mays (Maize).